The sequence spans 114 residues: Fluoride-specific ion channel FluC 2 (114 aa).

The next 3 membrane-spanning stretches (helical) occupy residues 30–50 (FPVA…LLSG), 57–77 (TFAL…TFAV), and 88–108 (ALPS…AAWL). 2 residues coordinate Na(+): Gly-67 and Thr-70.

Belongs to the fluoride channel Fluc/FEX (TC 1.A.43) family.

The protein resides in the cell membrane. It carries out the reaction fluoride(in) = fluoride(out). Na(+) is not transported, but it plays an essential structural role and its presence is essential for fluoride channel function. Fluoride-specific ion channel. Important for reducing fluoride concentration in the cell, thus reducing its toxicity. This Rhodococcus jostii (strain RHA1) protein is Fluoride-specific ion channel FluC 2.